The chain runs to 329 residues: MDKYLVKMPIKSTKNVVSEEKISVKEEKPKPKKVVKEQSAIANKRKNLDTPEIVNKENAEVENPPKRRSTRVTRSTRSMADVGTPSPEKEIPEKLPFIKYRGAIKYFTESQEIAASADEVMQWVDQQTHTEIVPMAFDMEWPFSFQTGPGKSSVIQICVDERCCYVYQLSNLKKIPAALVALINHPKVRLHGVNIKADFRKLARDFPEVAAEPLIEKCVDLGVWCNEVCETGGRWSLERLANFIAKKAMDKSKKVRMSKWHVIPLDENQLMYAAIDVYIGQVIYREIEQREQTKLKNEAEFKEQNGENAFKAVKALGETFLTKINEVTL.

A disordered region spans residues 26–88; sequence EEKPKPKKVV…MADVGTPSPE (63 aa). Residues 46–65 show a composition bias toward basic and acidic residues; it reads KNLDTPEIVNKENAEVENPP. Phosphoserine occurs at positions 78 and 86. One can recognise a 3'-5' exonuclease domain in the interval 130–288; it reads TEIVPMAFDM…IGQVIYREIE (159 aa). The Mg(2+) site is built by D138, E140, and D276.

It belongs to the WRNexo family.

It is found in the nucleus. In terms of biological role, has exonuclease activity on both single-stranded and duplex templates bearing overhangs, but not blunt ended duplex DNA, and cleaves in a 3'-5' direction. Essential for the formation of DNA replication focal centers. Has an important role in maintaining genome stability. In Drosophila mojavensis (Fruit fly), this protein is 3'-5' exonuclease.